The primary structure comprises 403 residues: MAVQTLKDLLDAGVEGRTVLVRSDLNVPLDGGEITDPGRIVASAPTLRALAEGGAKVIVTAHLGRPDGQPDPKFSLAPVAAKLAEILGRNVQLAGDVVGQDALARSEGLTDGDVLMLENIRFDPRETSKDEAERVKLAKALVELVGDDGAFVSDGFGVVHRKQASVFDVAKLLPHYAGYLVGAEVEVLAKLTQDAARPYAVVLGGSKVSDKLAVIEALAPKVDTLVIGGGMFYTFLAAQGVSVGNSLCEESMIETCKGLLDRYADVIHIPQDVVVADSFSADAESKIVPFDKIPDGWMGLDIGPESVKRFAAILTGAKTVFWNGPMGVFEFPKFEAGTRGVAEAIVEATEKGAFSVVGGGDSAAAVRQLGIPDEGFSHISTGGGASLEYLEGKELPGIAVLEG.

Substrate contacts are provided by residues 24-26 (DLN), R39, 62-65 (HLGR), R121, and R161. Residues K211, G299, E330, and 359–362 (GGDS) each bind ATP.

The protein belongs to the phosphoglycerate kinase family. In terms of assembly, monomer.

It is found in the cytoplasm. It catalyses the reaction (2R)-3-phosphoglycerate + ATP = (2R)-3-phospho-glyceroyl phosphate + ADP. The protein operates within carbohydrate degradation; glycolysis; pyruvate from D-glyceraldehyde 3-phosphate: step 2/5. The sequence is that of Phosphoglycerate kinase from Rhodococcus erythropolis (strain PR4 / NBRC 100887).